We begin with the raw amino-acid sequence, 1067 residues long: Eukaryotic translation initiation factor 3 subunit A (1067 aa).

Residues 92–121 (LKKFIELAEKKVTEAQAKADEIQSSLESAA) adopt a coiled-coil conformation. The PCI domain occupies 339 to 523 (MTKAASFVLL…GVLTFDTDIF (185 aa)). A coiled-coil region spans residues 608 to 899 (RVLIEKKKEA…QKQREEEAEA (292 aa)). Basic and acidic residues-rich tracts occupy residues 617–632 (AATD…EETR), 642–665 (EAEK…DEQD), 795–901 (EVSE…EARR), and 916–926 (AEPERPAERTA). 2 disordered regions span residues 617-665 (AATD…DEQD) and 795-1067 (EVSE…QQQQ). Composition is skewed to low complexity over residues 965–976 (AAPAAAPAPAAE) and 1025–1046 (SSSS…AASS).

It belongs to the eIF-3 subunit A family. In terms of assembly, component of the eukaryotic translation initiation factor 3 (eIF-3) complex.

It localises to the cytoplasm. In terms of biological role, RNA-binding component of the eukaryotic translation initiation factor 3 (eIF-3) complex, which is involved in protein synthesis of a specialized repertoire of mRNAs and, together with other initiation factors, stimulates binding of mRNA and methionyl-tRNAi to the 40S ribosome. The eIF-3 complex specifically targets and initiates translation of a subset of mRNAs involved in cell proliferation. In Neosartorya fischeri (strain ATCC 1020 / DSM 3700 / CBS 544.65 / FGSC A1164 / JCM 1740 / NRRL 181 / WB 181) (Aspergillus fischerianus), this protein is Eukaryotic translation initiation factor 3 subunit A (tif32).